The chain runs to 610 residues: E-selectin (610 aa).

Residues 1–21 (MIASQFLSALTLVLLIKESGA) form the signal peptide. One can recognise a C-type lectin domain in the interval 22–139 (WSYNTSTEAM…CSKKKLALCY (118 aa)). Topologically, residues 22-556 (WSYNTSTEAM…CEAPTESNIP (535 aa)) are extracellular. N-linked (GlcNAc...) asparagine glycosylation is present at asparagine 25. 5 cysteine pairs are disulfide-bonded: cysteine 40-cysteine 138, cysteine 111-cysteine 130, cysteine 143-cysteine 154, cysteine 148-cysteine 163, and cysteine 165-cysteine 174. Residues glutamate 101, asparagine 103, and glutamate 109 each contribute to the Ca(2+) site. A carbohydrate-binding positions include 101–109 (EPNNRQKDE), 113–118 (EIYIKR), and 126–128 (NDE). Positions 126 and 127 each coordinate Ca(2+). The region spanning 140–175 (TAACTNTSCSGHGECVETINNYTCKCDPGFSGLKCE) is the EGF-like domain. Asparagine 145 and asparagine 160 each carry an N-linked (GlcNAc...) asparagine glycan. 6 consecutive Sushi domains span residues 178-239 (VNCT…ACNV), 240-301 (VECD…TCKA), 303-364 (TCRA…VCEA), 366-427 (QCTA…TCEA), 429-490 (RCDA…SCQV), and 491-549 (VKCS…TCEA). Asparagine 179, asparagine 199, and asparagine 203 each carry an N-linked (GlcNAc...) asparagine glycan. 14 disulfide bridges follow: cysteine 180-cysteine 224, cysteine 193-cysteine 206, cysteine 210-cysteine 237, cysteine 242-cysteine 286, cysteine 255-cysteine 268, cysteine 272-cysteine 299, cysteine 304-cysteine 349, cysteine 335-cysteine 362, cysteine 367-cysteine 412, cysteine 398-cysteine 425, cysteine 430-cysteine 475, cysteine 461-cysteine 488, cysteine 493-cysteine 534, and cysteine 520-cysteine 547. Residue asparagine 265 is glycosylated (N-linked (GlcNAc...) asparagine). N-linked (GlcNAc...) asparagine glycosylation is found at asparagine 312 and asparagine 332. N-linked (GlcNAc...) asparagine glycans are attached at residues asparagine 503 and asparagine 527. A helical transmembrane segment spans residues 557-578 (LVAGLSAAGLSLLTLAPFLLWL). At 579 to 610 (RKCLRKAKKFVPASSCQSLESDGSYQKPSYIL) the chain is on the cytoplasmic side.

The protein belongs to the selectin/LECAM family. In terms of assembly, interacts with SELPLG/PSGL1 and PODXL2 through the sialyl Lewis X epitope. SELPLG sulfation appears not to be required for this interaction.

Its subcellular location is the cell membrane. Cell-surface glycoprotein having a role in immunoadhesion. Mediates in the adhesion of blood neutrophils in cytokine-activated endothelium through interaction with SELPLG/PSGL1. May have a role in capillary morphogenesis. This chain is E-selectin (SELE), found in Homo sapiens (Human).